The primary structure comprises 409 residues: MDVVTRFAPSPTGNLHIGGLRTAIFNFLYARRHGGKFLLRIEDTDLARSNTAYLESILQALKWLSLSYDELVYQSVNVNRHREVALELLNRGKAYHDNGAVRLKVNHDETVKFSDLILGEISADGDSINDVVILRSDGSPTYMLAVVVDDHDMGITHIIRGSDHITNTFAQKLIYEGMGWSLPDFAHIPLIHNTHGAKLSKRDGAVDVIDYRTAGILPEAMFNYLLRLGWSHGDKEIFSIQEAIDLFDITAVGKSPARFDREKLYSLNSYYISGLPLERIASEVRSLVEEKIIVSYSAFIAFVELFRKKCSSIVELKDNLQFCWCTDSCLEVDRLLLQEVLKLLENTDWGPSLQQILKEYISLSGFSAKEVYTNLRMALIGQEHSPSVVEIMQIFGKDVVLKKLRNSLK.

Positions 9-19 match the 'HIGH' region motif; it reads PSPTGNLHIGG. A 'KMSKS' region motif is present at residues 198 to 202; it reads KLSKR. Position 201 (lysine 201) interacts with ATP.

This sequence belongs to the class-I aminoacyl-tRNA synthetase family. Glutamate--tRNA ligase type 1 subfamily. Monomer.

Its subcellular location is the cytoplasm. The enzyme catalyses tRNA(Glu) + L-glutamate + ATP = L-glutamyl-tRNA(Glu) + AMP + diphosphate. Functionally, catalyzes the attachment of glutamate to tRNA(Glu) in a two-step reaction: glutamate is first activated by ATP to form Glu-AMP and then transferred to the acceptor end of tRNA(Glu). This chain is Glutamate--tRNA ligase 2, found in Neorickettsia sennetsu (strain ATCC VR-367 / Miyayama) (Ehrlichia sennetsu).